The primary structure comprises 459 residues: Cysteine--tRNA ligase (459 aa).

Cys-28 provides a ligand contact to Zn(2+). The 'HIGH' region signature appears at 30-40 (VTVYDLCHIGH). 3 residues coordinate Zn(2+): Cys-209, His-234, and Glu-238. Positions 266–270 (KMSKS) match the 'KMSKS' region motif. Lys-269 is an ATP binding site.

It belongs to the class-I aminoacyl-tRNA synthetase family. In terms of assembly, monomer. Zn(2+) serves as cofactor.

Its subcellular location is the cytoplasm. It catalyses the reaction tRNA(Cys) + L-cysteine + ATP = L-cysteinyl-tRNA(Cys) + AMP + diphosphate. This is Cysteine--tRNA ligase from Shewanella oneidensis (strain ATCC 700550 / JCM 31522 / CIP 106686 / LMG 19005 / NCIMB 14063 / MR-1).